A 133-amino-acid polypeptide reads, in one-letter code: UPF0292 protein TK1411 (133 aa).

The 81-residue stretch at 20 to 100 (EGALIVEGLR…SVDIETWKEL (81 aa)) folds into the Toprim domain. Mg(2+)-binding residues include Glu-26, Asp-69, and Asp-71.

Belongs to the UPF0292 family. Mg(2+) is required as a cofactor.

The chain is UPF0292 protein TK1411 from Thermococcus kodakarensis (strain ATCC BAA-918 / JCM 12380 / KOD1) (Pyrococcus kodakaraensis (strain KOD1)).